Here is a 56-residue protein sequence, read N- to C-terminus: uncharacterized protein (56 aa).

This is an uncharacterized protein from Haemophilus influenzae (strain ATCC 51907 / DSM 11121 / KW20 / Rd).